The following is a 156-amino-acid chain: WASQVSENRPVCKAIIQGKQFEGLVDTGADVSIIALNQWPKNWPKQKAVTGLVGIGTASEVYQSTEILHCLGPDNQESTVQPMITSIPLNLWGRDLLQQWGAEITMPAPLYSPTSQKIMTKMGYIPGKGLGKNEDGIKIPFEAKINQKREGIGYPF.

One can recognise a Peptidase A2 domain in the interval 21–96; it reads FEGLVDTGAD…IPLNLWGRDL (76 aa). D26 is an active-site residue. Residues 111–156 form the G-patch domain; it reads YSPTSQKIMTKMGYIPGKGLGKNEDGIKIPFEAKINQKREGIGYPF.

It belongs to the peptidase A2 family. HERV class-II K(HML-2) subfamily. As to quaternary structure, active as a homodimer. Autoproteolytically processed at the N-terminus. Expected C-terminal autoprocessing not detected. The sequence shown is that of the processed Pro protein.

It catalyses the reaction Processing at the authentic HIV-1 PR recognition site and release of the mature p17 matrix and the p24 capsid protein, as a result of the cleavage of the -SQNY-|-PIVQ- cleavage site.. Its function is as follows. Retroviral proteases have roles in processing of the primary translation products and the maturation of the viral particle. Endogenous Pro proteins may have kept, lost or modified their original function during evolution. This endogenous protein has retained most of the characteristics of retroviral proteases. The protein is Endogenous retrovirus group K member 24 Pro protein (ERVK-24) of Homo sapiens (Human).